Reading from the N-terminus, the 554-residue chain is Hydroxylamine reductase (554 aa).

The [2Fe-2S] cluster site is built by Cys-3, Cys-6, Cys-18, and Cys-25. Residues His-252, Glu-276, Cys-320, Cys-408, Cys-436, Cys-461, Glu-495, and Lys-497 each coordinate hybrid [4Fe-2O-2S] cluster. Residue Cys-408 is modified to Cysteine persulfide.

This sequence belongs to the HCP family. The cofactor is [2Fe-2S] cluster. Hybrid [4Fe-2O-2S] cluster is required as a cofactor.

The protein localises to the cytoplasm. The enzyme catalyses A + NH4(+) + H2O = hydroxylamine + AH2 + H(+). Functionally, catalyzes the reduction of hydroxylamine to form NH(3) and H(2)O. The protein is Hydroxylamine reductase of Shewanella amazonensis (strain ATCC BAA-1098 / SB2B).